Consider the following 365-residue polypeptide: MSAIYNFCAGPAMLPAAVMKKAQQELLDWNGLGVSVMEVSHRGKEFIALTKQAEADLRELMHIPQNYHVLFMHGGGRGQFSAVVNNFLGNQGRALYLVSGQWSSAALAEAQKLAGDAQIDSLNIVEKHNCLNAVVLPDLHKIDADYRYVHYCPNETVDGIEIFDELDSPWPIVADLSSTIMSREIDVSRYGLIYAGAQKNIGPSGLSIVIVRDDMLTLPSLPQSSIMDYRLAVEHDSMFNTPPTFAWYLAAEVFAWLKSIGGVASIAKINQQKAQMLYACIDANPFYKNGVVAANRSQMNVTFQLADESLDGAFLKEAEAVGLVALKGHRIVGGMRASLYNAMPLEGVAALVTFMNEFAAKHYNI.

Residue Arg42 coordinates L-glutamate. Residues 76 to 77 (GR), Trp102, Thr156, Asp175, and Gln198 each bind pyridoxal 5'-phosphate. Position 199 is an N6-(pyridoxal phosphate)lysine (Lys199). Position 240 to 241 (240 to 241 (NT)) interacts with pyridoxal 5'-phosphate.

This sequence belongs to the class-V pyridoxal-phosphate-dependent aminotransferase family. SerC subfamily. Homodimer. Requires pyridoxal 5'-phosphate as cofactor.

Its subcellular location is the cytoplasm. The catalysed reaction is O-phospho-L-serine + 2-oxoglutarate = 3-phosphooxypyruvate + L-glutamate. It carries out the reaction 4-(phosphooxy)-L-threonine + 2-oxoglutarate = (R)-3-hydroxy-2-oxo-4-phosphooxybutanoate + L-glutamate. It participates in amino-acid biosynthesis; L-serine biosynthesis; L-serine from 3-phospho-D-glycerate: step 2/3. The protein operates within cofactor biosynthesis; pyridoxine 5'-phosphate biosynthesis; pyridoxine 5'-phosphate from D-erythrose 4-phosphate: step 3/5. In terms of biological role, catalyzes the reversible conversion of 3-phosphohydroxypyruvate to phosphoserine and of 3-hydroxy-2-oxo-4-phosphonooxybutanoate to phosphohydroxythreonine. The protein is Phosphoserine aminotransferase of Shewanella oneidensis (strain ATCC 700550 / JCM 31522 / CIP 106686 / LMG 19005 / NCIMB 14063 / MR-1).